The chain runs to 122 residues: Large ribosomal subunit protein uL14 (122 aa).

Belongs to the universal ribosomal protein uL14 family. Part of the 50S ribosomal subunit. Forms a cluster with proteins L3 and L19. In the 70S ribosome, L14 and L19 interact and together make contacts with the 16S rRNA in bridges B5 and B8.

Functionally, binds to 23S rRNA. Forms part of two intersubunit bridges in the 70S ribosome. The protein is Large ribosomal subunit protein uL14 of Gloeothece citriformis (strain PCC 7424) (Cyanothece sp. (strain PCC 7424)).